The primary structure comprises 85 residues: Large ribosomal subunit protein bL27 (85 aa).

Residues 1–13 (MAKTKSGGSTSNG) show a composition bias toward polar residues. Residues 1 to 26 (MAKTKSGGSTSNGRDSKGRRLGQKLG) form a disordered region.

The protein belongs to the bacterial ribosomal protein bL27 family.

The chain is Large ribosomal subunit protein bL27 from Mycoplasma mobile (strain ATCC 43663 / 163K / NCTC 11711) (Mesomycoplasma mobile).